Consider the following 407-residue polypeptide: tRNA (uracil(54)-C(5))-methyltransferase (407 aa).

[4Fe-4S] cluster contacts are provided by Cys-61, Cys-67, Cys-70, and Cys-137. S-adenosyl-L-methionine contacts are provided by residues Gln-253, Tyr-279, Thr-284, 300-301 (DS), Asp-327, and Asp-341. Residue Cys-368 is the Nucleophile of the active site. The active-site Proton acceptor is Glu-400.

It belongs to the class I-like SAM-binding methyltransferase superfamily. RNA M5U methyltransferase family.

The enzyme catalyses uridine(54) in tRNA + S-adenosyl-L-methionine = 5-methyluridine(54) in tRNA + S-adenosyl-L-homocysteine + H(+). Catalyzes the formation of 5-methyl-uridine at position 54 (m5U54) in tRNA. The sequence is that of tRNA (uracil(54)-C(5))-methyltransferase from Pyrococcus horikoshii (strain ATCC 700860 / DSM 12428 / JCM 9974 / NBRC 100139 / OT-3).